A 152-amino-acid polypeptide reads, in one-letter code: Transcription factor ATOH7 (152 aa).

The region spanning 40 to 92 (RRRLAANARERRRMQGLNTAFDRLRRVVPQWGQDKKLSKYETLQMALSYIMAL) is the bHLH domain.

In terms of assembly, forms a heterodimer with TCF3 isoform E47; interaction may be required for DNA-binding in certain situations.

The protein resides in the nucleus. It is found in the perikaryon. It localises to the cell projection. Its subcellular location is the axon. Its function is as follows. Transcription factor that binds to DNA at the consensus sequence 5'-CAG[GC]TG-3'. Dimerization with TCF3 isoform E47 may be required in certain situations. Binds to gene promoters and enhancer elements, and thereby regulates a transcriptional program of retinal ganglion cell (RGC) determinant genes. Although the exact mechanism is not certain, retinal transcription regulation by ATOH7 has a role in RGC determination and survival, photoreceptor population development, targeting of RGC axons to the optic nerve and development of the retino-hypothalamic tract. Binds to its own promoter and enhancer sequences, suggesting autoregulation of ATOH7 transcription. Required for retinal circadian rhythm photoentrainment. Plays a role in brainstem auditory signaling and binaural processing. This is Transcription factor ATOH7 from Homo sapiens (Human).